Consider the following 612-residue polypeptide: Putative pentatricopeptide repeat-containing protein At5g40405 (612 aa).

PPR repeat units follow at residues 70-104, 107-141, 142-172, 173-203, 204-238, 239-273, 274-304, 305-339, 340-375, and 376-410; these read TLFA…GNDL, DNYT…GFDN, DPHV…IPCP, DFVC…MPER, DPIA…GVKV, NGVA…KIKI, TVRL…MEEK, NVYT…GVTP, NAVT…GIEP, and QLEH…PHAA. Positions 411–486 are type E motif; sequence VWSSLLHASR…QPGCSVMEVN (76 aa). Residues 487–517 form a type E(+) motif region; that stretch reads GEVHEFFVGDKSHPKYTQIDAVWKDISRRLR. Residues 518–612 form a type DYW motif region; sequence LAGYKADTTP…DGHCSCNGFW (95 aa).

The protein belongs to the PPR family. PCMP-H subfamily.

This Arabidopsis thaliana (Mouse-ear cress) protein is Putative pentatricopeptide repeat-containing protein At5g40405 (PCMP-H14).